A 186-amino-acid polypeptide reads, in one-letter code: Photosystem I assembly protein Ycf4 (186 aa).

A run of 2 helical transmembrane segments spans residues 22–42 (FCWACILFLGSLGFLVVGTSS) and 57–77 (IIFFPQGIVMSFYGIAGLFIS).

This sequence belongs to the Ycf4 family.

The protein resides in the plastid. It is found in the chloroplast thylakoid membrane. Functionally, seems to be required for the assembly of the photosystem I complex. The chain is Photosystem I assembly protein Ycf4 from Dioscorea elephantipes (Elephant's foot yam).